The following is a 466-amino-acid chain: Secreted RxLR effector protein 101 (466 aa).

Positions M1–A21 are cleaved as a signal peptide. Positions R48–R63 match the RxLR-dEER motif. Disordered regions lie at residues K99 to A127 and R384 to S405. Basic residues predominate over residues K109–T121. A compositionally biased stretch (polar residues) spans T385 to L395.

It belongs to the RxLR effector family.

It localises to the secreted. The protein resides in the host nucleus. Its function is as follows. Secreted effector that partially suppresses the host cell death induced by cell death-inducing proteins. The protein is Secreted RxLR effector protein 101 of Plasmopara viticola (Downy mildew of grapevine).